Here is a 595-residue protein sequence, read N- to C-terminus: MGKKSRVKTQKSGTGATATVSPKEILNLTSELLQKCSSPAPGPGKEWEEYVQIRTLVEKIRKKQKGLSVTFDGKREDYFPDLMKWASENGASVEGFEMVNFKEEGFGLRATRDIKAEELFLWVPRKLLMTVESAKNSVLGPLYSQDRILQAMGNIALAFHLLCERASPNSFWQPYIQTLPSEYDTPLYFEEDEVRYLQSTQAIHDVFSQYKNTARQYAYFYKVIQTHPHANKLPLKDSFTYEDYRWAVSSVMTRQNQIPTEDGSRVTLALIPLWDMCNHTNGLITTGYNLEDDRCECVALQDFRAGEQIYIFYGTRSNAEFVIHSGFFFDNNSHDRVKIKLGVSKSDRLYAMKAEVLARAGIPTSSVFALHFTEPPISAQLLAFLRVFCMTEEELKEHLLGDNAIDRIFTLGNSEFPVSWDNEVKLWTFLEDRASLLLKTYKTTIEEDKSVLKNQDLSVRAKMAIKLRLGEKEILEKAVKSAAGNREYYRQQMEEKAPLPKYEESNLGLLESSVGDSRLPLVLRNLEEEAGVQDALNIREAISKAKTTENGLVNGENSIPNGTRSENENLNQEGSKRAVEDAKGSSSDSTDEVKE.

Positions 1–22 (MGKKSRVKTQKSGTGATATVSP) are disordered. A compositionally biased stretch (polar residues) spans 10-20 (QKSGTGATATV). Residues Arg-75, 104 to 106 (EGF), Arg-254, 275 to 279 (DMCNH), and 325 to 327 (SGF) each bind S-adenosyl-L-methionine. The SET domain maps to 94 to 314 (EGFEMVNFKE…AGEQIYIFYG (221 aa)). Ser-513 bears the Phosphoserine mark. Positions 549–573 (ENGLVNGENSIPNGTRSENENLNQE) are enriched in polar residues. Positions 549–595 (ENGLVNGENSIPNGTRSENENLNQEGSKRAVEDAKGSSSDSTDEVKE) are disordered. The span at 574–583 (GSKRAVEDAK) shows a compositional bias: basic and acidic residues.

It belongs to the class V-like SAM-binding methyltransferase superfamily. SETD3 actin-histidine methyltransferase family. Interacts with MYOD1. Post-translationally, phosphorylated by GSK3B, which is required for recognition by the SCF(FBXW7) complex and subsequent degradation. Ubiquitinated by the SCF(FBXW7) complex following phosphorylation by GSK3B, leading to its degradation by the proteasome.

The protein resides in the cytoplasm. It localises to the nucleus. It catalyses the reaction L-histidyl-[protein] + S-adenosyl-L-methionine = N(tele)-methyl-L-histidyl-[protein] + S-adenosyl-L-homocysteine + H(+). In terms of biological role, protein-histidine N-methyltransferase that specifically mediates 3-methylhistidine (tele-methylhistidine) methylation of actin at 'His-73'. Histidine methylation of actin is required for smooth muscle contraction of the laboring uterus during delivery. Does not have protein-lysine N-methyltransferase activity and probably only catalyzes histidine methylation of actin. This is Actin-histidine N-methyltransferase from Plecturocebus moloch (Dusky titi monkey).